A 543-amino-acid polypeptide reads, in one-letter code: Fiber protein (543 aa).

Residues M1–L36 are disordered.

It belongs to the adenoviridae fiber family. In terms of assembly, homotrimer. Interacts (via N-terminal tail region) with pentons.

It localises to the virion. Its subcellular location is the host nucleus. Its function is as follows. Forms spikes that protrude from each vertex of the icosahedral capsid. Interacts with host receptor to provide virion initial attachment to target cell. Fiber proteins are shed during virus entry, when virus is still at the cell surface. This Canine adenovirus serotype 1 (strain RI261) (CAdV-1) protein is Fiber protein.